The following is a 357-amino-acid chain: DNA replication and repair protein RecF (357 aa).

30–37 (GANGSGKT) contacts ATP.

The protein belongs to the RecF family.

It is found in the cytoplasm. In terms of biological role, the RecF protein is involved in DNA metabolism; it is required for DNA replication and normal SOS inducibility. RecF binds preferentially to single-stranded, linear DNA. It also seems to bind ATP. This is DNA replication and repair protein RecF from Escherichia fergusonii (strain ATCC 35469 / DSM 13698 / CCUG 18766 / IAM 14443 / JCM 21226 / LMG 7866 / NBRC 102419 / NCTC 12128 / CDC 0568-73).